Consider the following 28-residue polypeptide: Chaperonin GroEL (28 aa).

Belongs to the chaperonin (HSP60) family. In terms of assembly, forms a cylinder of 14 subunits composed of two heptameric rings stacked back-to-back. Interacts with the co-chaperonin GroES.

It localises to the cytoplasm. The enzyme catalyses ATP + H2O + a folded polypeptide = ADP + phosphate + an unfolded polypeptide.. Functionally, together with its co-chaperonin GroES, plays an essential role in assisting protein folding. The GroEL-GroES system forms a nano-cage that allows encapsulation of the non-native substrate proteins and provides a physical environment optimized to promote and accelerate protein folding. This chain is Chaperonin GroEL, found in Mycolicibacterium smegmatis (Mycobacterium smegmatis).